A 338-amino-acid chain; its full sequence is Dehydrogenase/reductase SDR family member 7 (338 aa).

An N-terminal signal peptide occupies residues 1 to 28 (MSWELLLWLLALCALILPLVQLLRFLRA). NAD(+) is bound by residues Ser60 and Ile62. Ser190 contributes to the substrate binding site. The NAD(+) site is built by Tyr203, Lys207, and Ser239. Tyr203 (proton acceptor) is an active-site residue.

Belongs to the short-chain dehydrogenases/reductases (SDR) family.

It localises to the endoplasmic reticulum membrane. The catalysed reaction is all-trans-retinol + NADP(+) = all-trans-retinal + NADPH + H(+). It catalyses the reaction 5alpha-androstane-3alpha,17beta-diol + NADP(+) = 17beta-hydroxy-5alpha-androstan-3-one + NADPH + H(+). Its function is as follows. NADPH-dependent oxidoreductase which catalyzes the reduction of a variety of compounds bearing carbonyl groups including steroids, retinoids and xenobiotics. Catalyzes the reduction/inactivation of 5alpha-dihydrotestosterone to 3alpha-androstanediol, with a possible role in the modulation of androgen receptor function. Involved in the reduction of all-trans-retinal to all-trans-retinol. Converts cortisone to 20beta-dihydrocortisone in vitro, although the physiological relevance of this activity is questionable. Reduces exogenous compounds such as quinones (1,2-naphtoquinone, 9,10-phenantrenequinone and benzoquinone) and other xenobiotics (alpha-diketones) in vitro, suggesting a role in the biotransformation of xenobiotics with carbonyl group. A dehydrogenase activity has not been detected so far. May play a role as tumor suppressor. The chain is Dehydrogenase/reductase SDR family member 7 from Mus musculus (Mouse).